The primary structure comprises 410 residues: Tegument protein VP16 homolog (410 aa).

Positions 388-410 are disordered; the sequence is PPSPSEILPGDPPRPPTCGFLTR.

It belongs to the herpesviridae tegument protein VP16 protein family. Associates with the VP16-induced complex; binding to host HCFC1 activates VP16 for association with the octamer motif-binding host protein POU2F1, to form a multiprotein-DNA complex responsible for activating transcription of the viral immediate early genes.

The protein localises to the virion tegument. It is found in the host nucleus. Functionally, transcriptional activator of immediate-early (IE) gene products (alpha genes). Acts as a key activator of lytic infection by initiating the lytic program through the assembly of the transcriptional regulatory VP16-induced complex composed of VP16 and two cellular factors, HCFC1 and POU2F1. VP16-induced complex represents a regulatory switch: when it is on, it promotes IE-gene expression and thus lytic infection, and when it is off, it limits IE-gene transcription favoring latent infection. In terms of biological role, may play a role in the aggregation of tegument proteins around nucleocapsids during virus morphogenesis. The protein is Tegument protein VP16 homolog of Varicella-zoster virus (strain Dumas) (HHV-3).